A 188-amino-acid chain; its full sequence is FMN reductase (NADH) RutF (188 aa).

The protein belongs to the non-flavoprotein flavin reductase family. RutF subfamily.

The enzyme catalyses FMNH2 + NAD(+) = FMN + NADH + 2 H(+). In terms of biological role, catalyzes the reduction of FMN to FMNH2 which is used to reduce pyrimidine by RutA via the Rut pathway. The protein is FMN reductase (NADH) RutF of Acinetobacter baylyi (strain ATCC 33305 / BD413 / ADP1).